The chain runs to 66 residues: uncharacterized protein (66 aa).

This sequence belongs to the YeeT/YkfH/YpjJ family.

This is an uncharacterized protein from Escherichia coli (strain K12).